The following is a 612-amino-acid chain: MIVDNSKDFDLKSFLANLTTHSGVYRMLDKHGEIIYVGKAKNLKNRINSYFSKGAKDSKTLMMVEQIARIEITITPSDYEAYLLENNLIKQHRPKYNILFKDDKSYPYLVISRDKFPRVSFYRGKSAYKKGQCFGPYVSISSVKNTLNTIQKIFPIRQCENSYYKSRVRPCLQYQIKRCLAPCVGLVSQQQYDEQLAILKKFLAGKFSSVLEEISANMYQASEDMEYEKAQVYRDQLVVLRKLQQQQIVDIQEDKTFDVIGIYMQDSYASIALLQIQNGDVVADRHWSIDAKGQDKTSIMHAFLSHFYLGDEIRNIWPKNIILSKVEFADITDLMNSISQKIGQAINWIIAPAADNLKWLKLAEVNARQKLNIYTSSKSQYQKRLESLKEFLESEKDIKRIECFDISHFQGEATIASCVVYTDDGEDRKSHRRYNIKDIKSGDDYAAIHQAVSRRVSSGLEADNLPDVMIIDGGKGQIHQAEAVFREYGIQDKVQLVSLGKGVERISGKEKIYKGFDDTEYTLDEHNPGFLLLRQVRDSAHDHAIKGQRKKVSANRQSSIIEEIEGVGPKRRKALMMYFGGWQELSRASVDEIAKVKGISKKLAQEIWECFH.

The region spanning 20–98 (THSGVYRMLD…IKQHRPKYNI (79 aa)) is the GIY-YIG domain. The UVR domain occupies 208–243 (SSVLEEISANMYQASEDMEYEKAQVYRDQLVVLRKL).

It belongs to the UvrC family. As to quaternary structure, interacts with UvrB in an incision complex.

It localises to the cytoplasm. In terms of biological role, the UvrABC repair system catalyzes the recognition and processing of DNA lesions. UvrC both incises the 5' and 3' sides of the lesion. The N-terminal half is responsible for the 3' incision and the C-terminal half is responsible for the 5' incision. The polypeptide is UvrABC system protein C (Francisella tularensis subsp. holarctica (strain LVS)).